Reading from the N-terminus, the 288-residue chain is Bifunctional protein FolD (288 aa).

Residues 164 to 166 (GRS), Ser193, and Ile234 each bind NADP(+).

The protein belongs to the tetrahydrofolate dehydrogenase/cyclohydrolase family. Homodimer.

The catalysed reaction is (6R)-5,10-methylene-5,6,7,8-tetrahydrofolate + NADP(+) = (6R)-5,10-methenyltetrahydrofolate + NADPH. It carries out the reaction (6R)-5,10-methenyltetrahydrofolate + H2O = (6R)-10-formyltetrahydrofolate + H(+). The protein operates within one-carbon metabolism; tetrahydrofolate interconversion. Its function is as follows. Catalyzes the oxidation of 5,10-methylenetetrahydrofolate to 5,10-methenyltetrahydrofolate and then the hydrolysis of 5,10-methenyltetrahydrofolate to 10-formyltetrahydrofolate. This Nitratidesulfovibrio vulgaris (strain DSM 19637 / Miyazaki F) (Desulfovibrio vulgaris) protein is Bifunctional protein FolD.